The sequence spans 421 residues: MDKIQKIKGFADLFPPDSTVFSFIEETARQVFSRYGYKELRVPVLERTELFCRSIGEETDVVQKEMYTFPDRKGRSLTLRPEATAGVMRALVEDGRASEGLAKYFAYGPMFRYERPQKGRMRQFHQIDVEAVGSPDALLDAEVLLMLDQYLRALGLKNLVIELNSLGCKACRPIFLDTLREFLKGMHKEQLCEDCMRRKLSNPLRVLDCKVPQCKEFTADAPKITDHLCPDCADHFAAVRRVLDGAGLAYTLNPRLVRGLDYYVRTTFEIVSGDIGSQSSVAGGGRYDGLVHSIGGPDVPGVGFACGMERLALLIDKKAEPAPDFALVVLDAIGLERGLLLAQELRAAGFSGEAPYAAKSAKSQMRAADKSGAAFCLVLGSDELAAGTVVVKNMRAGGQETVSQDILPAHLRARLVAGQED.

It belongs to the class-II aminoacyl-tRNA synthetase family. In terms of assembly, homodimer.

It is found in the cytoplasm. It carries out the reaction tRNA(His) + L-histidine + ATP = L-histidyl-tRNA(His) + AMP + diphosphate + H(+). The protein is Histidine--tRNA ligase of Solidesulfovibrio magneticus (strain ATCC 700980 / DSM 13731 / RS-1) (Desulfovibrio magneticus).